Reading from the N-terminus, the 507-residue chain is MDSGSSSSSSSSGSSSGSCSTSGSGSTSGSSTTSSSSSSSSSSSSSSSSSSKEYMPELPKQRKASCVVIDSESDSDNTSDEKNTTVCEISSGDETSDIDRPGGQKLPLIVIDDDDDGSPDLKNTKQKSDEPQMSVLEKEGVECIGSDSTSPHDVCEIWDVCGSSNQTSSELEPEGEPESEAKGEPESEAKGEPESEAKGEPESEAKGESESEAKGEMETEAKGESESEAKGEMETEAKGESESEAKGEMETEAKGEPESEAKGEMETEAKGEPESEAKGEMETEAKGESESEAKGEMETEAKGESESEAKGEMETEAKGEPESEAKGEMETEAKGEPESEAKGEPEPEAAKGEMETEAAMGEVETEAAMGEPEQEITAEEAKKKRAAYLLAQQRKRKRKNRFICMSSSKPRRKRRRADPQDGADPQDGADPQDRADPQDLADPQDRGDSQDMPSLPGTSDEPIPSGQPVCPRKGMASSRGRGRGRGRGRGRGRGRGRGRGRGAKAGK.

The span at 1–51 (MDSGSSSSSSSSGSSSGSCSTSGSGSTSGSSTTSSSSSSSSSSSSSSSSSS) shows a compositional bias: low complexity. Positions 1 to 507 (MDSGSSSSSS…GRGRGAKAGK (507 aa)) are disordered. 4 short sequence motifs (SUMO interaction motif 1 (SIM)) span residues 12-15 (SGSS), 66-69 (CVVI), 86-89 (VCEI), and 108-111 (LIVI). Basic and acidic residues-rich tracts occupy residues 122–141 (KNTK…KEGV), 179–354 (SEAK…KGEM), and 431–449 (PQDR…RGDS). Basic residues predominate over residues 480–507 (GRGRGRGRGRGRGRGRGRGRGRGAKAGK).

This sequence belongs to the serine-aspartate repeat-containing protein (SDr) family. As to quaternary structure, interacts (via SIM domains) with SUMO2; this interaction allows the GCNA recruitment to DPCs sites. Interacts with TOP2A; this interaction allows the resolution of topoisomerase II (TOP2A) DNA-protein cross-links. Germ-cells specific.

Its subcellular location is the chromosome. It is found in the nucleus. It localises to the PML body. May play a role in DNA-protein cross-links (DPCs) clearance through a SUMO-dependent recruitment to sites of DPCs, ensuring the genomic stability by protecting germ cells and early embryos from various sources of damage. Can resolve the topoisomerase II (TOP2A) DPCs. The chain is Germ cell nuclear acidic protein from Mus musculus (Mouse).